A 1464-amino-acid chain; its full sequence is Nuclear pore complex protein NUP155 (1464 aa).

The residue at position 2 (serine 2) is an N-acetylserine.

This sequence belongs to the non-repetitive/WGA-negative nucleoporin family. Part of the nuclear pore complex (NPC). The NPC has an eight-fold symmetrical structure comprising a central transport channel and two rings, the cytoplasmic and nuclear rings, to which eight filaments are attached. The cytoplasmic filaments have loose ends, while the nuclear filaments are joined in a distal ring, forming a nuclear basket. NPCs are highly dynamic in configuration and composition, and can be devided in 3 subcomplexes, the NUP62 subcomplex, the NUP107-160 subcomplex and the NUP93 subcomplex, containing approximately 30 different nucleoporin proteins.

It is found in the nucleus. The protein localises to the nuclear pore complex. Functionally, major component of the nuclear pore complex (NPC). This is Nuclear pore complex protein NUP155 from Arabidopsis thaliana (Mouse-ear cress).